Reading from the N-terminus, the 348-residue chain is Ferredoxin--NADP reductase 1 (348 aa).

The FAD site is built by aspartate 33, lysine 41, tyrosine 45, valine 85, leucine 120, aspartate 287, and serine 328.

This sequence belongs to the ferredoxin--NADP reductase type 2 family. In terms of assembly, homodimer. FAD serves as cofactor.

It carries out the reaction 2 reduced [2Fe-2S]-[ferredoxin] + NADP(+) + H(+) = 2 oxidized [2Fe-2S]-[ferredoxin] + NADPH. This chain is Ferredoxin--NADP reductase 1, found in Oceanobacillus iheyensis (strain DSM 14371 / CIP 107618 / JCM 11309 / KCTC 3954 / HTE831).